A 353-amino-acid polypeptide reads, in one-letter code: D-glycerol 3-phosphate phosphatase (353 aa).

The active-site Nucleophile is Asp14. Residues Asp14, Asp16, and Asp209 each contribute to the Mg(2+) site. Catalysis depends on Asp16, which acts as the Proton donor.

The protein belongs to the HAD-like hydrolase superfamily. Homodimer. Requires Mg(2+) as cofactor. Co(2+) is required as a cofactor. It depends on Mn(2+) as a cofactor.

The catalysed reaction is sn-glycerol 1-phosphate + H2O = glycerol + phosphate. It participates in glycerolipid metabolism. In terms of biological role, dephosphorylates D-glycerol 3-phosphate (sn-glycerol 1-phosphate). Is the final enzyme involved in the recycling/catabolism of glycerophospholipid polar heads. To a lesser extent, is also able to act on glycerol 2-phosphate and D-ribulose 5-phosphate, but cannot use D-glyceraldehyde 3-phosphate, dihydroxyacetone-phosphate, UMP or GMP as substrates. The protein is D-glycerol 3-phosphate phosphatase of Mycobacterium tuberculosis (strain ATCC 25618 / H37Rv).